The sequence spans 343 residues: N-acetyl-gamma-glutamyl-phosphate reductase (343 aa).

C146 is an active-site residue.

It belongs to the NAGSA dehydrogenase family. Type 1 subfamily.

Its subcellular location is the cytoplasm. The catalysed reaction is N-acetyl-L-glutamate 5-semialdehyde + phosphate + NADP(+) = N-acetyl-L-glutamyl 5-phosphate + NADPH + H(+). It functions in the pathway amino-acid biosynthesis; L-arginine biosynthesis; N(2)-acetyl-L-ornithine from L-glutamate: step 3/4. In terms of biological role, catalyzes the NADPH-dependent reduction of N-acetyl-5-glutamyl phosphate to yield N-acetyl-L-glutamate 5-semialdehyde. This chain is N-acetyl-gamma-glutamyl-phosphate reductase, found in Paenarthrobacter aurescens (strain TC1).